A 35-amino-acid polypeptide reads, in one-letter code: uncharacterized protein (35 aa).

The chain crosses the membrane as a helical span at residues 10 to 30; it reads LMITASFFAIFIIIVVSVLLL.

The protein localises to the membrane. This is an uncharacterized protein from Salmonella typhimurium (strain LT2 / SGSC1412 / ATCC 700720).